Consider the following 737-residue polypeptide: Genome polyprotein (737 aa).

Ser-2 bears the N-acetylserine; by host mark. The segment at 2-23 (STNPKPQRKTKRNTNRRPQDVK) is interaction with STAT1. The tract at residues 2–58 (STNPKPQRKTKRNTNRRPQDVKFPGGGQIVGGVYLLPRRGPRLGVRATRKTSERSQP) is interaction with EIF2AK2/PKR. The interaction with DDX3X stretch occupies residues 2–59 (STNPKPQRKTKRNTNRRPQDVKFPGGGQIVGGVYLLPRRGPRLGVRATRKTSERSQPR). A disordered region spans residues 2-75 (STNPKPQRKT…PKDRRSTGKS (74 aa)). The Cytoplasmic portion of the chain corresponds to 2 to 168 (STNPKPQRKT…EDGINYATGN (167 aa)). Short sequence motifs (nuclear localization signal) lie at residues 5-13 (PKPQRKTKR) and 38-43 (PRRGPR). A compositionally biased stretch (basic residues) spans 7-16 (PQRKTKRNTN). Low complexity predominate over residues 32–47 (GGVYLLPRRGPRLGVR). Position 53 is a phosphoserine; by host (Ser-53). 2 short sequence motifs (nuclear localization signal) span residues 58-64 (PRGRRQP) and 66-71 (PKDRRS). A phosphoserine; by host mark is found at Ser-99 and Ser-116. An important for endoplasmic reticulum and mitochondrial localization region spans residues 112–152 (PRHRSRNLGKVIDTLTCGFADLMGYIPVVGAPVGGVARALA). The interaction with APOA2 stretch occupies residues 122-173 (VIDTLTCGFADLMGYIPVVGAPVGGVARALAHGVRVLEDGINYATGNLPGCS). The interval 164–167 (YATG) is important for lipid droplets localization. Residues 169–189 (LPGCSFSIFLLALLSCVTVPV) traverse the membrane as a helical segment. The propeptide at 178–191 (LLALLSCVTVPVSA) is ER anchor for the core protein, removed in mature form by host signal peptidase. Residues 190–358 (SAVEVRNISS…FGGHWGVVFG (169 aa)) are Lumenal-facing. Asn-196, Asn-209, and Asn-233 each carry an N-linked (GlcNAc...) asparagine; by host glycan. An important for fusion region spans residues 265–296 (IVMAATVCSALYVGDICGAVMIASQAFIISPE). A glycan (N-linked (GlcNAc...) asparagine; by host) is linked at Asn-305. The chain crosses the membrane as a helical span at residues 359–379 (LAYFSMQGAWAKVIAILLLVA). Residues 380–729 (GVDASTQVTG…WEWVILLFLL (350 aa)) are Lumenal-facing. The HVR1 stretch occupies residues 385 to 411 (TQVTGGQAAHTVRGVASIFSPGSRQDI). N-linked (GlcNAc...) (high mannose) asparagine; by host glycosylation is found at Asn-417, Asn-423, Asn-430, and Asn-448. 4 disulfides stabilise this stretch: Cys-429/Cys-554, Cys-452/Cys-459, Cys-488/Cys-496, and Cys-505/Cys-510. The tract at residues 474 to 481 (YETNVTNE) is HVR2. Positions 482-495 (EDMRPYCWHYPPKP) are CD81-binding 1. Residue Asn-542 is glycosylated (N-linked (GlcNAc...) asparagine; by host). The tract at residues 546 to 553 (PPRGAWFG) is CD81-binding 2. Asn-558 carries an N-linked (GlcNAc...) (high mannose) asparagine; by host glycan. Intrachain disulfides connect Cys-566/Cys-571, Cys-585/Cys-589, Cys-601/Cys-624, and Cys-611/Cys-648. N-linked (GlcNAc...) (high mannose) asparagine; by host glycosylation is found at Asn-627 and Asn-649. Cys-656 and Cys-681 are joined by a disulfide. Residues 664-675 (SQQSPLLHSTTE) form a PKR/eIF2-alpha phosphorylation homology domain (PePHD) region. A helical membrane pass occupies residues 730–737 (LADARVCA).

It belongs to the hepacivirus polyprotein family. As to quaternary structure, homooligomer. Interacts with E1 (via C-terminus). Interacts with the non-structural protein 5A. Interacts (via N-terminus) with host STAT1 (via SH2 domain); this interaction results in decreased STAT1 phosphorylation and ubiquitin-mediated proteasome-dependent STAT1 degradation, leading to decreased IFN-stimulated gene transcription. Interacts with host STAT3; this interaction constitutively activates STAT3. Interacts with host LTBR receptor. Interacts with host TNFRSF1A receptor and possibly induces apoptosis. Interacts with host HNRPK. Interacts with host YWHAE. Interacts with host UBE3A/E6AP. Interacts with host DDX3X. Interacts with host APOA2. Interacts with host RXRA protein. Interacts with host SP110 isoform 3/Sp110b; this interaction sequesters the transcriptional corepressor SP110 away from the nucleus. Interacts with host CREB3 nuclear transcription protein; this interaction triggers cell transformation. Interacts with host ACY3. Interacts with host C1QR1. Interacts with host RBM24; this interaction, which enhances the interaction of the mature core protein with 5'-UTR, may inhibit viral translation and favor replication. Interacts with host EIF2AK2/PKR; this interaction induces the autophosphorylation of EIF2AK2. Part of the viral assembly initiation complex composed of NS2, E1, E2, NS3, NS4A, NS5A and the mature core protein. Forms a heterodimer with envelope glycoprotein E2. Interacts with mature core protein. Interacts with protease NS2. The heterodimer E1/E2 interacts with host CLDN1; this interaction plays a role in viral entry into host cell. Interacts with host SPSB2 (via C-terminus). Part of the viral assembly initiation complex composed of NS2, E1, E2, NS3, NS4A, NS5A and the mature core protein. In terms of assembly, forms a heterodimer with envelope glycoprotein E1. Interacts with host CD81 and SCARB1 receptors; these interactions play a role in viral entry into host cell. Interacts with host EIF2AK2/PKR; this interaction inhibits EIF2AK2 and probably allows the virus to evade the innate immune response. Interacts with host CD209/DC-SIGN and CLEC4M/DC-SIGNR. Interact with host SPCS1; this interaction is essential for viral particle assembly. Interacts with protease NS2. The heterodimer E1/E2 interacts with host CLDN1; this interaction plays a role in viral entry into host cell. Part of the viral assembly initiation complex composed of NS2, E1, E2, NS3, NS4A, NS5A and the mature core protein. Specific enzymatic cleavages in vivo yield mature proteins. The structural proteins, core, E1, E2 and p7 are produced by proteolytic processing by host signal peptidases. The core protein precursor is synthesized as a 23 kDa, which is retained in the ER membrane through the hydrophobic signal peptide. Cleavage by the signal peptidase releases the 21 kDa mature core protein. The cleavage of the core protein precursor occurs between aminoacids 176 and 188 but the exact cleavage site is not known. Some degraded forms of the core protein appear as well during the course of infection. The other proteins (p7, NS2, NS3, NS4A, NS4B, NS5A and NS5B) are cleaved by the viral proteases. Autoprocessing between NS2 and NS3 is mediated by the NS2 cysteine protease catalytic domain and regulated by the NS3 N-terminal domain. Post-translationally, phosphorylated by host PKC and PKA. In terms of processing, ubiquitinated; mediated by UBE3A and leading to core protein subsequent proteasomal degradation. Highly N-glycosylated.

Its subcellular location is the host endoplasmic reticulum membrane. The protein localises to the host mitochondrion membrane. It is found in the virion. It localises to the host cytoplasm. The protein resides in the host nucleus. Its subcellular location is the host lipid droplet. The protein localises to the virion membrane. Functionally, packages viral RNA to form a viral nucleocapsid, and promotes virion budding. Participates in the viral particle production as a result of its interaction with the non-structural protein 5A. Binds RNA and may function as a RNA chaperone to induce the RNA structural rearrangements taking place during virus replication. Modulates viral translation initiation by interacting with viral IRES and 40S ribosomal subunit. Affects various cell signaling pathways, host immunity and lipid metabolism. Prevents the establishment of cellular antiviral state by blocking the interferon-alpha/beta (IFN-alpha/beta) and IFN-gamma signaling pathways and by blocking the formation of phosphorylated STAT1 and promoting ubiquitin-mediated proteasome-dependent degradation of STAT1. Activates STAT3 leading to cellular transformation. Regulates the activity of cellular genes, including c-myc and c-fos. May repress the promoter of p53, and sequester CREB3 and SP110 isoform 3/Sp110b in the cytoplasm. Represses cell cycle negative regulating factor CDKN1A, thereby interrupting an important check point of normal cell cycle regulation. Targets transcription factors involved in the regulation of inflammatory responses and in the immune response: suppresses TNF-induced NF-kappa-B activation, and activates AP-1. Binds to dendritic cells (DCs) via C1QR1, resulting in down-regulation of T-lymphocytes proliferation. Alters lipid metabolism by interacting with hepatocellular proteins involved in lipid accumulation and storage. Induces up-regulation of FAS promoter activity, and thereby contributes to the increased triglyceride accumulation in hepatocytes (steatosis). Its function is as follows. Forms a heterodimer with envelope glycoprotein E2, which mediates virus attachment to the host cell, virion internalization through clathrin-dependent endocytosis and fusion with host membrane. Fusion with the host cell is most likely mediated by both E1 and E2, through conformational rearrangements of the heterodimer required for fusion rather than a classical class II fusion mechanism. E1/E2 heterodimer binds host apolipoproteins such as APOB and ApoE thereby forming a lipo-viro-particle (LVP). APOE associated to the LVP allows the initial virus attachment to cell surface receptors such as the heparan sulfate proteoglycans (HSPGs), syndecan-1 (SDC1), syndecan-1 (SDC2), the low-density lipoprotein receptor (LDLR) and scavenger receptor class B type I (SCARB1). The cholesterol transfer activity of SCARB1 allows E2 exposure and binding of E2 to SCARB1 and the tetraspanin CD81. E1/E2 heterodimer binding on CD81 activates the epithelial growth factor receptor (EGFR) signaling pathway. Diffusion of the complex E1-E2-EGFR-SCARB1-CD81 to the cell lateral membrane allows further interaction with Claudin 1 (CLDN1) and occludin (OCLN) to finally trigger HCV entry. Forms a heterodimer with envelope glycoprotein E1, which mediates virus attachment to the host cell, virion internalization through clathrin-dependent endocytosis and fusion with host membrane. Fusion with the host cell is most likely mediated by both E1 and E2, through conformational rearrangements of the heterodimer required for fusion rather than a classical class II fusion mechanism. The interaction between envelope glycoprotein E2 and host apolipoprotein E/APOE allows the proper assembly, maturation and infectivity of the viral particles. This interaction is probably promoted via the up-regulation of cellular autophagy by the virus. E1/E2 heterodimer binds host apolipoproteins such as APOB and APOE thereby forming a lipo-viro-particle (LVP). APOE associated to the LVP allows the initial virus attachment to cell surface receptors such as the heparan sulfate proteoglycans (HSPGs), syndecan-1 (SDC1), syndecan-1 (SDC2), the low-density lipoprotein receptor (LDLR) and scavenger receptor class B type I (SCARB1). The cholesterol transfer activity of SCARB1 allows E2 exposure and binding of E2 to SCARB1 and the tetraspanin CD81. E1/E2 heterodimer binding on CD81 activates the epithelial growth factor receptor (EGFR) signaling pathway. Diffusion of the complex E1-E2-EGFR-SCARB1-CD81 to the cell lateral membrane allows further interaction with Claudin 1 (CLDN1) and occludin (OCLN) to finally trigger HCV entry. Inhibits host EIF2AK2/PKR activation, preventing the establishment of an antiviral state. Viral ligand for CD209/DC-SIGN and CLEC4M/DC-SIGNR, which are respectively found on dendritic cells (DCs), and on liver sinusoidal endothelial cells and macrophage-like cells of lymph node sinuses. These interactions allow the capture of circulating HCV particles by these cells and subsequent facilitated transmission to permissive cells such as hepatocytes and lymphocyte subpopulations. The polypeptide is Genome polyprotein (Hepatitis C virus (isolate HC-J7) (HCV)).